The primary structure comprises 99 residues: Small ribosomal subunit protein uS14m (99 aa).

Belongs to the universal ribosomal protein uS14 family.

It localises to the mitochondrion. The chain is Small ribosomal subunit protein uS14m (RPS14) from Marchantia polymorpha (Common liverwort).